Consider the following 446-residue polypeptide: Rhoptry surface protein CERLI1 (446 aa).

The region spanning 39–208 (KPIGQLYRLM…NQTKNNEKIE (170 aa)) is the C2 domain. The PH domain maps to 252 to 363 (GYLLHSNFYI…ILVSNYKRER (112 aa)).

It is found in the cytoplasmic vesicle. The protein resides in the secretory vesicle. It localises to the rhoptry membrane. Essential for merozoite invasion of host cells by controlling rhoptry secretion. Binds to phosphatidic acid (PA) and phosphatidylinositol 4,5-bisphosphate (PIP2) lipids and thus, likely contributes to the assembly of the machinery that docks or primes the rhoptry to the parasite cell membrane prior to the fusion with the host cell membrane. The polypeptide is Rhoptry surface protein CERLI1 (Plasmodium falciparum (isolate 3D7)).